The chain runs to 134 residues: Ribosome-binding factor A (134 aa).

Belongs to the RbfA family. As to quaternary structure, monomer. Binds 30S ribosomal subunits, but not 50S ribosomal subunits or 70S ribosomes.

It is found in the cytoplasm. Functionally, one of several proteins that assist in the late maturation steps of the functional core of the 30S ribosomal subunit. Associates with free 30S ribosomal subunits (but not with 30S subunits that are part of 70S ribosomes or polysomes). Required for efficient processing of 16S rRNA. May interact with the 5'-terminal helix region of 16S rRNA. This chain is Ribosome-binding factor A, found in Sinorhizobium medicae (strain WSM419) (Ensifer medicae).